A 255-amino-acid chain; its full sequence is 6-phosphogluconolactonase 4 (255 aa).

It belongs to the glucosamine/galactosamine-6-phosphate isomerase family. 6-phosphogluconolactonase subfamily.

Its subcellular location is the cytoplasm. The enzyme catalyses 6-phospho-D-glucono-1,5-lactone + H2O = 6-phospho-D-gluconate + H(+). The protein operates within carbohydrate degradation; pentose phosphate pathway; D-ribulose 5-phosphate from D-glucose 6-phosphate (oxidative stage): step 2/3. Involved in the pentose phosphate pathway via hydrolysis of 6-phosphogluconolactone to 6-phosphogluconate. This is 6-phosphogluconolactonase 4 from Saccharomyces cerevisiae (strain ATCC 204508 / S288c) (Baker's yeast).